Reading from the N-terminus, the 116-residue chain is Large ribosomal subunit protein bL17 (116 aa).

Belongs to the bacterial ribosomal protein bL17 family. Part of the 50S ribosomal subunit. Contacts protein L32.

This is Large ribosomal subunit protein bL17 from Prochlorococcus marinus (strain SARG / CCMP1375 / SS120).